A 307-amino-acid chain; its full sequence is Fe-S cluster assembly protein dre2 (307 aa).

Disordered regions lie at residues 1–26 (MTPV…PSTS) and 159–179 (KKKK…VGFV). Positions 15–26 (AAPPTKTAPSTS) are enriched in low complexity. The segment at 23 to 152 (PSTSTRTLLL…EKPAYQEAAV (130 aa)) is N-terminal SAM-like domain. The interval 153–197 (PLRLGGKKKKAPAPTEQPPVATGVGFVDGNDELIDEDDLLSDDDL) is linker. Cys207, Cys219, Cys222, and Cys224 together coordinate [2Fe-2S] cluster. Residues 207 to 224 (CQPEKAKKRRRPCKDCTC) form a fe-S binding site A region. [4Fe-4S] cluster-binding residues include Cys270, Cys273, Cys281, and Cys284. 2 consecutive short sequence motifs (cx2C motif) follow at residues 270–273 (CNSC) and 281–284 (CSSC). A fe-S binding site B region spans residues 270–284 (CNSCSLGDAFRCSSC).

Belongs to the anamorsin family. As to quaternary structure, monomer. Interacts with tah18. Interacts with mia40. It depends on [2Fe-2S] cluster as a cofactor. [4Fe-4S] cluster serves as cofactor.

It is found in the cytoplasm. The protein localises to the mitochondrion intermembrane space. Functionally, component of the cytosolic iron-sulfur (Fe-S) protein assembly (CIA) machinery required for the maturation of extramitochondrial Fe-S proteins. Part of an electron transfer chain functioning in an early step of cytosolic Fe-S biogenesis, facilitating the de novo assembly of a [4Fe-4S] cluster on the scaffold complex cfd1-nbp35. Electrons are transferred to dre2 from NADPH via the FAD- and FMN-containing protein tah18. Tah18-dre2 are also required for the assembly of the diferric tyrosyl radical cofactor of ribonucleotide reductase (RNR), probably by providing electrons for reduction during radical cofactor maturation in the catalytic small subunit rnr2. In Aspergillus terreus (strain NIH 2624 / FGSC A1156), this protein is Fe-S cluster assembly protein dre2.